A 354-amino-acid chain; its full sequence is Guanine nucleotide-binding protein G(t) subunit alpha-3 (354 aa).

The interval 1 to 27 is disordered; it reads MGSGISSESKESAKRSKELEKKLQEDA. The N-myristoyl glycine moiety is linked to residue Gly2. Positions 8-27 are enriched in basic and acidic residues; that stretch reads ESKESAKRSKELEKKLQEDA. One can recognise a G-alpha domain in the interval 32-354; that stretch reads RTVKLLLLGA…KENLKDCGLF (323 aa). A G1 motif region spans residues 35 to 48; that stretch reads KLLLLGAGESGKST. GTP is bound by residues 40-47, 175-181, 200-204, 269-272, and Ala326; these read GAGESGKS, LHSRVKT, DVGGQ, and NKKD. Residues Ser47 and Thr181 each contribute to the Mg(2+) site. The interval 173-181 is G2 motif; it reads DVLHSRVKT. Residues 196–205 are G3 motif; it reads FRMFDVGGQR. The interval 265–272 is G4 motif; that stretch reads VLFLNKKD. The G5 motif stretch occupies residues 324–329; that stretch reads TCATDT.

The protein belongs to the G-alpha family. G(i/o/t/z) subfamily. In terms of assembly, g proteins are composed of 3 units; alpha, beta and gamma, respectively GNAT3, GNB1 and GNG13 for Gustducin heterotrimer for bitter taste transduction. The alpha chain contains the guanine nucleotide binding site. Component of the TAS2R14-GNAT3 complex, consisting of TAS2R14, GNAT3, GNB1 and GNG2; within the complex interacts with TAS2R14; this complex plays a role in the perception of bitterness. Gustducin heterotrimer may also be composed of GNAT3, GNB3 and GNG13. Post-translationally, potential N-myristoylation may anchor alpha-subunit to the inner surface of plasma membrane. As to expression, expressed in taste buds (sensory organs of clustered epithelial cells) of the circumvallate, foliate and fungiform papillae of the tongue, as well as in nasoincisor, palatal and epiglottal taste buds at protein level. Expressed in enteroendocrine of the gut, in the lumenal pole of a subset of brush cells lining the stomach and the intestine at protein level. Detected in solitary cells throughout the respiratory track. Expressed also in spermatozoa.

It localises to the cytoplasm. Functionally, guanine nucleotide-binding protein (G protein) alpha subunit playing a prominent role in bitter and sweet taste transduction as well as in umami (monosodium glutamate, monopotassium glutamate, and inosine monophosphate) taste transduction. Transduction by this alpha subunit involves coupling of specific cell-surface receptors with a cGMP-phosphodiesterase; Activation of phosphodiesterase lowers intracellular levels of cAMP and cGMP which may open a cyclic nucleotide-suppressible cation channel leading to influx of calcium, ultimately leading to release of neurotransmitter. Indeed, denatonium and strychnine induce transient reduction in cAMP and cGMP in taste tissue, whereas this decrease is inhibited by GNAT3 antibody. Gustducin heterotrimer transduces response to bitter and sweet compounds via regulation of phosphodiesterase for alpha subunit, as well as via activation of phospholipase C for beta and gamma subunits, with ultimate increase inositol trisphosphate and increase of intracellular Calcium. GNAT3 can functionally couple to taste receptors to transmit intracellular signal: receptor heterodimer TAS1R2/TAS1R3 senses sweetness and TAS1R1/TAS1R3 transduces umami taste, whereas the T2R family GPCRs act as bitter sensors. Also functions as lumenal sugar sensors in the gut to control the expression of the Na+-glucose transporter SGLT1 in response to dietaty sugar, as well as the secretion of Glucagon-like peptide-1, GLP-1 and glucose-dependent insulinotropic polypeptide, GIP. Thus, may modulate the gut capacity to absorb sugars, with implications for the prevention and treatment of malabsorption syndromes and diet-related disorders including diabetes and obesity. The protein is Guanine nucleotide-binding protein G(t) subunit alpha-3 (Gnat3) of Rattus norvegicus (Rat).